Here is a 508-residue protein sequence, read N- to C-terminus: Transcriptional regulatory protein moc3 (508 aa).

A disordered region spans residues 15-43 (NRTGSINSNPLYIPNPNVEPTPKPTKRRT). The zn(2)-C6 fungal-type DNA-binding region spans 46–76 (GCLTCRRRRIKCDETKPFCLNCTKTNRECEG). Disordered stretches follow at residues 110–146 (ASSS…STVT) and 174–193 (NHNV…KPSV). A compositionally biased stretch (low complexity) spans 176-193 (NVPTNNSSSATSSTKPSV).

As to quaternary structure, interacts with zfs1.

It localises to the nucleus. In terms of biological role, induces sexual development and ascus formation. Also involved in calcium homeostasis. This is Transcriptional regulatory protein moc3 (moc3) from Schizosaccharomyces pombe (strain 972 / ATCC 24843) (Fission yeast).